Consider the following 451-residue polypeptide: Tubulin alpha-1 chain (451 aa).

A GTP-binding site is contributed by glutamine 11. N6-acetyllysine is present on lysine 40. GTP-binding residues include glutamate 71, glycine 144, threonine 145, threonine 179, asparagine 206, and asparagine 228. Glutamate 71 lines the Mg(2+) pocket. The active site involves glutamate 254.

This sequence belongs to the tubulin family. Dimer of alpha and beta chains. A typical microtubule is a hollow water-filled tube with an outer diameter of 25 nm and an inner diameter of 15 nM. Alpha-beta heterodimers associate head-to-tail to form protofilaments running lengthwise along the microtubule wall with the beta-tubulin subunit facing the microtubule plus end conferring a structural polarity. Microtubules usually have 13 protofilaments but different protofilament numbers can be found in some organisms and specialized cells. Mg(2+) is required as a cofactor. In terms of processing, undergoes a tyrosination/detyrosination cycle, the cyclic removal and re-addition of a C-terminal tyrosine residue by the enzymes tubulin tyrosine carboxypeptidase (TTCP) and tubulin tyrosine ligase (TTL), respectively. Post-translationally, acetylation of alpha chains at Lys-40 stabilizes microtubules and affects affinity and processivity of microtubule motors. This modification has a role in multiple cellular functions, ranging from cell motility, cell cycle progression or cell differentiation to intracellular trafficking and signaling.

It localises to the cytoplasm. Its subcellular location is the cytoskeleton. It carries out the reaction GTP + H2O = GDP + phosphate + H(+). Its function is as follows. Tubulin is the major constituent of microtubules, a cylinder consisting of laterally associated linear protofilaments composed of alpha- and beta-tubulin heterodimers. Microtubules grow by the addition of GTP-tubulin dimers to the microtubule end, where a stabilizing cap forms. Below the cap, tubulin dimers are in GDP-bound state, owing to GTPase activity of alpha-tubulin. The chain is Tubulin alpha-1 chain (TUBA1) from Eleusine indica (Goosegrass).